The chain runs to 744 residues: Tripartite motif-containing protein 2 (744 aa).

Phosphoserine is present on serine 10. The RING-type zinc-finger motif lies at 23–64; that stretch reads CSICLERYKNPKVLPCLHTFCERCLQNYIPAHSLTLSCPVCR. The B box-type zinc-finger motif lies at 113-154; sequence GKPLSCPNHDGNVMEFYCQSCETAMCRECTEGEHAEHPTVPL. Residues cysteine 118, histidine 121, cysteine 141, and histidine 146 each contribute to the Zn(2+) site. The stretch at 320 to 421 is one Filamin repeat; sequence TTNAVASETV…IRGSPFKLKV (102 aa). Threonine 371 carries the phosphothreonine modification. Serine 375, serine 424, and serine 428 each carry phosphoserine. A disordered region spans residues 432 to 462; it reads EGVKRRVKSPGSGHVKQKAVKRPASMYSTGK. 6 NHL repeats span residues 473–516, 520–563, 564–605, 609–652, 656–699, and 700–743; these read IFRV…FSND, KSRF…FSSD, GKFK…FQPN, VTRF…FNQE, MLKF…FDGS, and GSFL…YRYL.

The protein belongs to the TRIM/RBCC family. Forms homooligomers. Interacts with TRIM3; this interaction reduces TRIM2 activity. Interacts with myosin V; myosin V may not be a substrate for ubiquitination. Interacts with NEFL. Interacts with phosphorylated BCL2L11. Interacts with SIRPA. Post-translationally, RING-type zinc finger-dependent and UBE2D1-dependent autoubiquitination.

Its subcellular location is the cytoplasm. It catalyses the reaction S-ubiquitinyl-[E2 ubiquitin-conjugating enzyme]-L-cysteine + [acceptor protein]-L-lysine = [E2 ubiquitin-conjugating enzyme]-L-cysteine + N(6)-ubiquitinyl-[acceptor protein]-L-lysine.. It functions in the pathway protein modification; protein ubiquitination. Functionally, UBE2D1-dependent E3 ubiquitin-protein ligase that mediates the ubiquitination of NEFL and of phosphorylated BCL2L11. Plays a neuroprotective function. May play a role in neuronal rapid ischemic tolerance. Plays a role in antiviral immunity and limits New World arenavirus infection independently of its ubiquitin ligase activity. This chain is Tripartite motif-containing protein 2 (TRIM2), found in Callithrix jacchus (White-tufted-ear marmoset).